A 451-amino-acid chain; its full sequence is Opioid growth factor receptor-like protein 1 (451 aa).

Disordered stretches follow at residues 1 to 89 and 308 to 451; these read MGNL…TAKP and ENFI…VLVQ. Residues 43–66 show a composition bias toward low complexity; the sequence is PGQESEQPAQPPEQAGGRPGASPA. The segment covering 322–341 has biased composition (polar residues); the sequence is GSKAQKMSSPLASSHNSQTS. 2 stretches are compositionally biased toward basic and acidic residues: residues 362-381 and 389-399; these read TAED…DRPS and AKPRNTEKDSN. A compositionally biased stretch (low complexity) spans 431–443; that stretch reads NDNQDNENPGNTN.

It belongs to the opioid growth factor receptor family. Ubiquitous.

In Homo sapiens (Human), this protein is Opioid growth factor receptor-like protein 1 (OGFRL1).